The primary structure comprises 176 residues: Acireductone dioxygenase (176 aa).

Positions 1–21 (MKAYWYDNKPGDQREPHDSGR) are disordered. The segment covering 9–20 (KPGDQREPHDSG) has biased composition (basic and acidic residues). The Fe(2+) site is built by histidine 81, histidine 83, glutamate 87, and histidine 126. 4 residues coordinate Ni(2+): histidine 81, histidine 83, glutamate 87, and histidine 126.

Belongs to the acireductone dioxygenase (ARD) family. It depends on Fe(2+) as a cofactor. Ni(2+) is required as a cofactor.

It is found in the cytoplasm. The protein localises to the nucleus. It carries out the reaction 1,2-dihydroxy-5-(methylsulfanyl)pent-1-en-3-one + O2 = 4-methylsulfanyl-2-oxobutanoate + formate + 2 H(+). It catalyses the reaction 1,2-dihydroxy-5-(methylsulfanyl)pent-1-en-3-one + O2 = 3-(methylsulfanyl)propanoate + CO + formate + 2 H(+). Its pathway is amino-acid biosynthesis; L-methionine biosynthesis via salvage pathway; L-methionine from S-methyl-5-thio-alpha-D-ribose 1-phosphate: step 5/6. Functionally, catalyzes 2 different reactions between oxygen and the acireductone 1,2-dihydroxy-3-keto-5-methylthiopentene (DHK-MTPene) depending upon the metal bound in the active site. Fe-containing acireductone dioxygenase (Fe-ARD) produces formate and 2-keto-4-methylthiobutyrate (KMTB), the alpha-ketoacid precursor of methionine in the methionine recycle pathway. Ni-containing acireductone dioxygenase (Ni-ARD) produces methylthiopropionate, carbon monoxide and formate, and does not lie on the methionine recycle pathway. This chain is Acireductone dioxygenase (adi1), found in Aspergillus fumigatus (strain ATCC MYA-4609 / CBS 101355 / FGSC A1100 / Af293) (Neosartorya fumigata).